A 711-amino-acid chain; its full sequence is DNA topoisomerase 1 (711 aa).

The Toprim domain occupies 3-134 (KNLVVIESPN…KCQRITFNEI (132 aa)). Glutamate 9 and aspartate 102 together coordinate Mg(2+). Positions 150–604 (DQSWVQSQFA…FWSNFKEEVK (455 aa)) constitute a Topo IA-type catalytic domain. Residues 183–188 (SAGRVQ) form an interaction with DNA region. The active-site O-(5'-phospho-DNA)-tyrosine intermediate is the tyrosine 340. C4-type zinc fingers lie at residues 624 to 652 (CPSC…FPNC) and 673 to 702 (CPEC…FPRC).

The protein belongs to the type IA topoisomerase family. Monomer. Mg(2+) is required as a cofactor.

It carries out the reaction ATP-independent breakage of single-stranded DNA, followed by passage and rejoining.. In terms of biological role, releases the supercoiling and torsional tension of DNA, which is introduced during the DNA replication and transcription, by transiently cleaving and rejoining one strand of the DNA duplex. Introduces a single-strand break via transesterification at a target site in duplex DNA. The scissile phosphodiester is attacked by the catalytic tyrosine of the enzyme, resulting in the formation of a DNA-(5'-phosphotyrosyl)-enzyme intermediate and the expulsion of a 3'-OH DNA strand. The free DNA strand then undergoes passage around the unbroken strand, thus removing DNA supercoils. Finally, in the religation step, the DNA 3'-OH attacks the covalent intermediate to expel the active-site tyrosine and restore the DNA phosphodiester backbone. The chain is DNA topoisomerase 1 from Mycoplasma pneumoniae (strain ATCC 29342 / M129 / Subtype 1) (Mycoplasmoides pneumoniae).